The sequence spans 129 residues: Small ribosomal subunit protein uS11 (129 aa).

This sequence belongs to the universal ribosomal protein uS11 family. Part of the 30S ribosomal subunit. Interacts with proteins S7 and S18. Binds to IF-3.

Functionally, located on the platform of the 30S subunit, it bridges several disparate RNA helices of the 16S rRNA. Forms part of the Shine-Dalgarno cleft in the 70S ribosome. This is Small ribosomal subunit protein uS11 from Aeromonas hydrophila subsp. hydrophila (strain ATCC 7966 / DSM 30187 / BCRC 13018 / CCUG 14551 / JCM 1027 / KCTC 2358 / NCIMB 9240 / NCTC 8049).